We begin with the raw amino-acid sequence, 345 residues long: uncharacterized protein (345 aa).

The protein belongs to the transketolase family. Requires thiamine diphosphate as cofactor.

This is an uncharacterized protein from Sinorhizobium fredii (strain NBRC 101917 / NGR234).